We begin with the raw amino-acid sequence, 66 residues long: Large ribosomal subunit protein bL33c (66 aa).

It belongs to the bacterial ribosomal protein bL33 family.

It localises to the plastid. The protein resides in the chloroplast. In Agrostis stolonifera (Creeping bentgrass), this protein is Large ribosomal subunit protein bL33c.